Consider the following 396-residue polypeptide: Tail sheath protein (396 aa).

It belongs to the myoviridae tail sheath protein family. Homomultimer.

Its subcellular location is the virion. The protein localises to the host cytoplasm. Functionally, polymerizes as an extended helical structure around the baseplate-tail tube complex. During ejection, the sheath shifts to a contracted form, thereby making the inner tail tube protrude through the host cell envelope. This is Tail sheath protein (FI) from Enterobacteriaceae (Bacteriophage P2).